The chain runs to 224 residues: uncharacterized protein (224 aa).

Residues Gln108–Glu137 are a coiled coil.

This is an uncharacterized protein from Human picobirnavirus (strain Human/Thailand/Hy005102/-) (PBV).